The following is a 250-amino-acid chain: 1-acyl-sn-glycerol-3-phosphate acyltransferase (250 aa).

Residues 88–93 carry the HXXXXD motif motif; it reads HIAAMD.

This sequence belongs to the 1-acyl-sn-glycerol-3-phosphate acyltransferase family.

It carries out the reaction a 1-acyl-sn-glycero-3-phosphate + an acyl-CoA = a 1,2-diacyl-sn-glycero-3-phosphate + CoA. It participates in phospholipid metabolism; CDP-diacylglycerol biosynthesis; CDP-diacylglycerol from sn-glycerol 3-phosphate: step 2/3. In terms of biological role, converts lysophosphatidic acid (LPA) into phosphatidic acid by incorporating acyl moiety at the 2 position. This chain is 1-acyl-sn-glycerol-3-phosphate acyltransferase (plsC), found in Borreliella burgdorferi (strain ATCC 35210 / DSM 4680 / CIP 102532 / B31) (Borrelia burgdorferi).